Reading from the N-terminus, the 452-residue chain is tRNA modification GTPase MnmE (452 aa).

Residues Arg-21, Glu-78, and Lys-118 each contribute to the (6S)-5-formyl-5,6,7,8-tetrahydrofolate site. The region spanning 214-375 is the TrmE-type G domain; it reads GMKAVIAGRP…LREHLKTSMG (162 aa). Asn-224 provides a ligand contact to K(+). GTP-binding positions include 224–229, 243–249, and 268–271; these read NAGKSS, TNIAGTT, and DTAG. Mg(2+) is bound at residue Ser-228. K(+) contacts are provided by Thr-243, Ile-245, and Thr-248. Thr-249 is a Mg(2+) binding site. Lys-452 is a (6S)-5-formyl-5,6,7,8-tetrahydrofolate binding site.

The protein belongs to the TRAFAC class TrmE-Era-EngA-EngB-Septin-like GTPase superfamily. TrmE GTPase family. As to quaternary structure, homodimer. Heterotetramer of two MnmE and two MnmG subunits. Requires K(+) as cofactor.

It localises to the cytoplasm. Its function is as follows. Exhibits a very high intrinsic GTPase hydrolysis rate. Involved in the addition of a carboxymethylaminomethyl (cmnm) group at the wobble position (U34) of certain tRNAs, forming tRNA-cmnm(5)s(2)U34. In Haemophilus ducreyi (strain 35000HP / ATCC 700724), this protein is tRNA modification GTPase MnmE.